Reading from the N-terminus, the 593-residue chain is Zinc metalloproteinase-disintegrin-like atrase-B (593 aa).

The N-terminal stretch at 1–20 (MIQALLVIICLAVFPHQGSS) is a signal peptide. The propeptide occupies 21–191 (IILESGNVND…DESIEKTSQL (171 aa)). Residues 205-400 (KYIEFYVIVD…DRPQCILNKP (196 aa)) form the Peptidase M12B domain. Ca(2+)-binding residues include E208 and D292. 3 disulfide bridges follow: C316/C395, C356/C379, and C358/C363. A glycan (N-linked (GlcNAc...) asparagine) is linked at N319. Residue H341 participates in Zn(2+) binding. E342 is a catalytic residue. Zn(2+) is bound by residues H345 and H351. Ca(2+) is bound by residues C395, N398, I410, N413, F415, E417, E420, and D423. Residues 408 to 477 (PPICGNYFVE…ECPTDSLQRN (70 aa)) form the Disintegrin domain. 11 disulfide bridges follow: C422-C435, C424-C430, C434-C440, C449-C469, C456-C488, C481-C493, C500-C550, C515-C558, C528-C538, C545-C581, and C575-C586. Residues 455 to 457 (DCD) carry the D/ECD-tripeptide motif. 4 residues coordinate Ca(2+): D457, L458, E460, and D472. N490 carries N-linked (GlcNAc...) asparagine glycosylation.

Belongs to the venom metalloproteinase (M12B) family. P-III subfamily. P-IIIa sub-subfamily. As to quaternary structure, monomer. Zn(2+) is required as a cofactor. Expressed by the venom gland.

It localises to the secreted. Inhibited by EDTA, EGTA, 1,10-phenanthroline and DTT. Not inhibited by PMSF and SBTI. In terms of biological role, snake venom zinc protease that inhibits the classical and alternative pathways of complement by cleaving factor B, C6, C7, and C8. Also slowly and selectively degrades alpha-chain of fibrinogen (FGA), and shows edema-inducing activity. The chain is Zinc metalloproteinase-disintegrin-like atrase-B from Naja atra (Chinese cobra).